The sequence spans 176 residues: Inner membrane assembly complex subunit 17 (176 aa).

Residues 1–28 (MLRVLPTSFKSISTRSAFRACQLSPLTV) constitute a mitochondrion transit peptide. At 29 to 98 (YCPLKSSQGT…MSQEVSLKRF (70 aa)) the chain is on the mitochondrial matrix side. A helical transmembrane segment spans residues 99–121 (VRPLWVFFLMSSTVYLILHYVWW). At 122-176 (KLEVVEKEKELQSHVESLEMELDQTLKSQNQNVSSSQNNGNNKTNDKPWYRKWFF) the chain is on the mitochondrial intermembrane side. The stretch at 123–151 (LEVVEKEKELQSHVESLEMELDQTLKSQN) forms a coiled coil. A compositionally biased stretch (low complexity) spans 149 to 163 (SQNQNVSSSQNNGNN). The interval 149–168 (SQNQNVSSSQNNGNNKTNDK) is disordered.

Belongs to the INA17 family. As to quaternary structure, component of the inner membrane assembly (INA) complex, composed of INA17 and INA22. Interacts with a subset of F(1)F(0)-ATP synthase subunits of the F(1)-domain and the peripheral stalk.

Its subcellular location is the mitochondrion inner membrane. In terms of biological role, component of the INA complex (INAC) that promotes the biogenesis of mitochondrial F(1)F(0)-ATP synthase. INAC facilitates the assembly of the peripheral stalk and promotes the assembly of the catalytic F(1)-domain with the membrane-embedded F(0)-domain. This chain is Inner membrane assembly complex subunit 17, found in Zygosaccharomyces rouxii (strain ATCC 2623 / CBS 732 / NBRC 1130 / NCYC 568 / NRRL Y-229).